The sequence spans 331 residues: Centriolar satellite-associated tubulin polyglutamylase complex regulator 1 (331 aa).

The segment at 1–111 is required for interaction with PCM1; the sequence is MLSPERLALP…HCLLQLLCPD (111 aa). The tract at residues 1 to 225 is required for interaction with TPGS1, LRRC49, and TTLL1; that stretch reads MLSPERLALP…SCPPPALVKE (225 aa). Residues 112-331 form a required for interaction with TPGS2 region; the sequence is FPLELTQKAA…STEETDESET (220 aa). The segment at 292–331 is disordered; it reads SCLPSRTPPRVGSPWKPLHRSRKLDAESDGSTEETDESET. Over residues 318–331 the composition is skewed to acidic residues; it reads ESDGSTEETDESET. Position 319 is a phosphoserine (Ser319).

It belongs to the CSTPP1 family. As to quaternary structure, interacts with PCM1. Interacts with TTLL1, TPGS1, TPGS2 and LRRC49; the interactions link CSTPP1 to the complex TPGC. Binds to alpha-tubulin.

It is found in the cytoplasm. It localises to the cytoskeleton. Its subcellular location is the microtubule organizing center. The protein resides in the centrosome. The protein localises to the centriolar satellite. Functionally, regulator of the tubulin polyglutamylase complex (TPGC) that controls cytoskeletal organization, nuclear shape, and cilium disassembly by balancing microtubule and actin assembly. Regulates the assembly and stability of the TPGC and thereby modulates polyglutamylation of the microtubule, which antagonizes MAP4 binding. In Mus musculus (Mouse), this protein is Centriolar satellite-associated tubulin polyglutamylase complex regulator 1.